A 457-amino-acid polypeptide reads, in one-letter code: Multidrug resistance protein MdtK (457 aa).

12 helical membrane-spanning segments follow: residues 11 to 31, 46 to 66, 93 to 113, 127 to 147, 160 to 180, 188 to 208, 243 to 263, 283 to 301, 316 to 336, 357 to 377, 387 to 407, and 418 to 438; these read LLAL…MGVV, AVAV…GLLL, WLAL…DHVI, AVGF…FQVL, GMVI…IFIY, LGGV…FLMM, LPVA…ALLV, LMFM…RVGF, YTSM…TIVF, LMLL…GSGV, IFFI…YLLG, and PAGF…LMVL.

Belongs to the multi antimicrobial extrusion (MATE) (TC 2.A.66.1) family. MdtK subfamily.

It is found in the cell inner membrane. Its function is as follows. Multidrug efflux pump that functions probably as a Na(+)/drug antiporter. The sequence is that of Multidrug resistance protein MdtK from Yersinia pseudotuberculosis serotype IB (strain PB1/+).